The chain runs to 309 residues: Homoserine O-succinyltransferase (309 aa).

Cys-142 functions as the Acyl-thioester intermediate in the catalytic mechanism. Substrate contacts are provided by Lys-163 and Ser-192. Catalysis depends on His-235, which acts as the Proton acceptor. Glu-237 is an active-site residue. Arg-249 provides a ligand contact to substrate.

The protein belongs to the MetA family.

It is found in the cytoplasm. The catalysed reaction is L-homoserine + succinyl-CoA = O-succinyl-L-homoserine + CoA. The protein operates within amino-acid biosynthesis; L-methionine biosynthesis via de novo pathway; O-succinyl-L-homoserine from L-homoserine: step 1/1. Transfers a succinyl group from succinyl-CoA to L-homoserine, forming succinyl-L-homoserine. The polypeptide is Homoserine O-succinyltransferase (Serratia proteamaculans (strain 568)).